Here is a 297-residue protein sequence, read N- to C-terminus: 4-diphosphocytidyl-2-C-methyl-D-erythritol kinase (297 aa).

Active-site residues include K6 and D144.

The protein belongs to the GHMP kinase family. IspE subfamily.

The enzyme catalyses 4-CDP-2-C-methyl-D-erythritol + ATP = 4-CDP-2-C-methyl-D-erythritol 2-phosphate + ADP + H(+). It functions in the pathway isoprenoid biosynthesis; isopentenyl diphosphate biosynthesis via DXP pathway; isopentenyl diphosphate from 1-deoxy-D-xylulose 5-phosphate: step 3/6. In terms of biological role, catalyzes the phosphorylation of the position 2 hydroxy group of 4-diphosphocytidyl-2C-methyl-D-erythritol. This Leptospira interrogans serogroup Icterohaemorrhagiae serovar Lai (strain 56601) protein is 4-diphosphocytidyl-2-C-methyl-D-erythritol kinase.